Reading from the N-terminus, the 1252-residue chain is Protein ITPRID2 (1252 aa).

A disordered region spans residues 28 to 70; that stretch reads CRSSWQASETEDLSTETTTQDEDEDDEEDLPGTKLPAPAGRGN. Acidic residues predominate over residues 36 to 57; the sequence is ETEDLSTETTTQDEDEDDEEDL. Threonine 85 carries the post-translational modification Phosphothreonine. Phosphoserine is present on residues serine 90, serine 109, serine 207, serine 268, and serine 328. 3 disordered regions span residues 306–483, 552–575, and 595–636; these read DKTE…HVPA, HVTP…APLQ, and FPQC…GELP. Low complexity predominate over residues 357–372; that stretch reads TVTEEVSGSSSTVTDS. Basic and acidic residues-rich tracts occupy residues 395–407 and 415–428; these read SREA…DPLR and DLGH…HCEL. The segment covering 429 to 441 has biased composition (low complexity); it reads ESSSELKSAQASS. Serine 465 carries the post-translational modification Phosphoserine. Serine 643, serine 667, serine 736, serine 738, serine 745, serine 758, and serine 766 each carry phosphoserine. Lysine 807 is covalently cross-linked (Glycyl lysine isopeptide (Lys-Gly) (interchain with G-Cter in SUMO2)). Serine 866 and serine 898 each carry phosphoserine. The stretch at 955–1031 forms a coiled coil; sequence QELQVVRRSL…LLGLDEQLRA (77 aa). Residues serine 1036, serine 1051, serine 1056, serine 1059, and serine 1114 each carry the phosphoserine modification. 2 disordered regions span residues 1095 to 1131 and 1147 to 1180; these read GESS…GSKP and ALTP…ASPV. Over residues 1103-1117 the composition is skewed to low complexity; that stretch reads SQATSESSSVCSSPS. At threonine 1149 the chain carries Phosphothreonine. A compositionally biased stretch (polar residues) spans 1151 to 1161; sequence TAPSRTGSVQT. Phosphoserine is present on serine 1154. Residue threonine 1161 is modified to Phosphothreonine.

Its subcellular location is the cytoplasm. In Mus musculus (Mouse), this protein is Protein ITPRID2 (Itprid2).